The following is a 24-amino-acid chain: MNVSQIYARNGELFSGRICKQKRQ.

In Escherichia coli (strain K12), this protein is Protein YsdE.